Reading from the N-terminus, the 328-residue chain is MTATKLHKKVILVGDGAVGSSYAFALVNQGIAQELGIIEIPQLFEKAVGDALDLSHALPFTSPKKIYAAKYEDCADADLVVITAGAPQKPGETRLDLVGKNLAINKSIVTQVVESGFNGIFLVAANPVDVLTYSTWKFSGFPKERVIGSGTSLDSARFRQALAEKLNVDARSVHAYIMGEHGDSEFAVWSHANIAGVNLEEFLKDKENVQEAELVELFEGVRDAAYTIINKKGATYYGIAVALARITKAILDDENAVLPLSVFQEGQYGVNNIFIGQPAIVGAHGIVRPVNIPLNDAEQQKMKASADELQAIIDEAWKNPEFQEASKN.

NAD(+) is bound by residues Val-18, Glu-39, Lys-46, Tyr-71, and 85-86; that span reads GA. Substrate contacts are provided by Gln-88 and Arg-94. NAD(+) is bound by residues Ser-107, 124 to 126, and Ser-149; that span reads AAN. 126–129 serves as a coordination point for substrate; sequence NPVD. Position 154–157 (154–157) interacts with substrate; the sequence is DSAR. Beta-D-fructose 1,6-bisphosphate is bound by residues Arg-159 and His-174. The active-site Proton acceptor is the His-181. Position 226 is a phosphotyrosine (Tyr-226). Thr-235 provides a ligand contact to substrate.

The protein belongs to the LDH/MDH superfamily. LDH family. In terms of assembly, homotetramer.

The protein resides in the cytoplasm. It catalyses the reaction (S)-lactate + NAD(+) = pyruvate + NADH + H(+). It functions in the pathway fermentation; pyruvate fermentation to lactate; (S)-lactate from pyruvate: step 1/1. Allosterically activated by fructose 1,6-bisphosphate (FBP). Catalyzes the conversion of lactate to pyruvate. The sequence is that of L-lactate dehydrogenase from Streptococcus thermophilus (strain CNRZ 1066).